Here is a 328-residue protein sequence, read N- to C-terminus: DNA-directed RNA polymerase subunit alpha (328 aa).

Positions 1–232 (MSTQGFLKPR…DQISVFAALE (232 aa)) are alpha N-terminal domain (alpha-NTD). Positions 248–328 (IDPVLLRPVD…NWPPLGLERP (81 aa)) are alpha C-terminal domain (alpha-CTD).

It belongs to the RNA polymerase alpha chain family. In terms of assembly, homodimer. The RNAP catalytic core consists of 2 alpha, 1 beta, 1 beta' and 1 omega subunit. When a sigma factor is associated with the core the holoenzyme is formed, which can initiate transcription.

It carries out the reaction RNA(n) + a ribonucleoside 5'-triphosphate = RNA(n+1) + diphosphate. DNA-dependent RNA polymerase catalyzes the transcription of DNA into RNA using the four ribonucleoside triphosphates as substrates. The sequence is that of DNA-directed RNA polymerase subunit alpha from Bordetella petrii (strain ATCC BAA-461 / DSM 12804 / CCUG 43448).